A 143-amino-acid chain; its full sequence is Putative pre-16S rRNA nuclease (143 aa).

This sequence belongs to the YqgF nuclease family.

It is found in the cytoplasm. In terms of biological role, could be a nuclease involved in processing of the 5'-end of pre-16S rRNA. The protein is Putative pre-16S rRNA nuclease (ybeB) of Lactococcus lactis subsp. lactis (strain IL1403) (Streptococcus lactis).